A 232-amino-acid polypeptide reads, in one-letter code: MAPSLLGGFTKSLAMTVLSEIGDKTFFAAAILAMRYPRKLVLAGCLTSLTVMTALSVSLGWVAPNLISRKWTHHVTTLLFFVFGILSLWEGFKEDGDSEELAEVEAELDANFKSNKAESKSKSKANDDKKKQQRPFVLQFFSPIFIKAFSITFFGEWGDKSQIATIGLAADENPFGVVLGGVLAQALCTTAAVMGGKSLASQISEKMVGLSSGVLFLLFGIMSYLSGPEGEL.

Helical transmembrane passes span 13 to 33 (LAMTVLSEIGDKTFFAAAILA), 40 to 60 (LVLAGCLTSLTVMTALSVSLG), 72 to 92 (THHVTTLLFFVFGILSLWEGF), 135 to 155 (PFVLQFFSPIFIKAFSITFFG), 175 to 195 (FGVVLGGVLAQALCTTAAVMG), and 207 to 227 (MVGLSSGVLFLLFGIMSYLSG).

Belongs to the GDT1 family.

The protein resides in the membrane. This is GDT1-like protein 5 from Oryza sativa subsp. japonica (Rice).